Reading from the N-terminus, the 201-residue chain is Type III effector protein HopBF1 (201 aa).

6 residues coordinate ATP: Ser-39, Gln-40, Lys-41, Asp-106, Ile-108, and Asp-113. Asp-154 is an active-site residue. An ATP-binding site is contributed by Gln-156.

The protein belongs to the HopBF1 family.

Its subcellular location is the secreted. The protein localises to the host cell. The catalysed reaction is L-seryl-[protein] + ATP = O-phospho-L-seryl-[protein] + ADP + H(+). Functionally, effector protein that targets and inactivates the plant molecular chaperone HSP90 during infection. HopBF1 is recognized by HSP90 as a host client. As a result, HopBF1 phosphorylates HSP90, leading to the inactivation of the HSP90 ATPase activity and chaperone function. Phosphorylation of HSP90 prevents activation of immune receptors that trigger the hypersensitive response in plants. HopBF1 is sufficient to cause severe disease symptoms in plants infected with P.syringae. In vitro, can phosphorylate the recombinant yeast HSP82 (HSP90) on Ser-99, Triticum aestivum (wheat) HSP90 and human HSP 90-beta, but not the prokaryotic HSP90 orthologs, HtpG from E.coli and P.syringae. Does not act on generic protein kinase substrates such as casein and myelin basic protein, as well as the yeast HSP70s and Bip chaperones. The protein is Type III effector protein HopBF1 of Pseudomonas syringae pv. syringae (strain FF5).